Reading from the N-terminus, the 523-residue chain is 2-isopropylmalate synthase (523 aa).

Positions valine 5–histidine 267 constitute a Pyruvate carboxyltransferase domain. Mn(2+) contacts are provided by aspartate 14, histidine 202, histidine 204, and asparagine 238. A regulatory domain region spans residues glutamine 392–valine 523.

It belongs to the alpha-IPM synthase/homocitrate synthase family. LeuA type 1 subfamily. Homodimer. Mn(2+) is required as a cofactor.

The protein localises to the cytoplasm. The catalysed reaction is 3-methyl-2-oxobutanoate + acetyl-CoA + H2O = (2S)-2-isopropylmalate + CoA + H(+). Its pathway is amino-acid biosynthesis; L-leucine biosynthesis; L-leucine from 3-methyl-2-oxobutanoate: step 1/4. Catalyzes the condensation of the acetyl group of acetyl-CoA with 3-methyl-2-oxobutanoate (2-ketoisovalerate) to form 3-carboxy-3-hydroxy-4-methylpentanoate (2-isopropylmalate). This Shewanella woodyi (strain ATCC 51908 / MS32) protein is 2-isopropylmalate synthase.